The primary structure comprises 142 residues: Hemoglobin subunit alpha-A (142 aa).

One can recognise a Globin domain in the interval 2-142 (VLSAADKTNV…VGAVLTAKYR (141 aa)). Residue H59 coordinates O2. A heme b-binding site is contributed by H88.

The protein belongs to the globin family. In terms of assembly, heterotetramer of two alpha chains and two beta chains. Red blood cells.

Functionally, involved in oxygen transport from the lung to the various peripheral tissues. The chain is Hemoglobin subunit alpha-A (HBAA) from Cairina moschata (Muscovy duck).